The chain runs to 1041 residues: Isoleucine--tRNA ligase (1041 aa).

Positions 53 to 63 match the 'HIGH' region motif; it reads PFANGLPHYGH. The 'KMSKS' region signature appears at 619–623; that stretch reads KMSKS. Lysine 622 provides a ligand contact to ATP.

The protein belongs to the class-I aminoacyl-tRNA synthetase family. IleS type 2 subfamily. Monomer. Requires Zn(2+) as cofactor.

The protein resides in the cytoplasm. It carries out the reaction tRNA(Ile) + L-isoleucine + ATP = L-isoleucyl-tRNA(Ile) + AMP + diphosphate. Its function is as follows. Catalyzes the attachment of isoleucine to tRNA(Ile). As IleRS can inadvertently accommodate and process structurally similar amino acids such as valine, to avoid such errors it has two additional distinct tRNA(Ile)-dependent editing activities. One activity is designated as 'pretransfer' editing and involves the hydrolysis of activated Val-AMP. The other activity is designated 'posttransfer' editing and involves deacylation of mischarged Val-tRNA(Ile). The chain is Isoleucine--tRNA ligase from Mycobacterium bovis (strain ATCC BAA-935 / AF2122/97).